The primary structure comprises 135 residues: Prostate and breast cancer overexpressed gene 1 protein (135 aa).

In terms of tissue distribution, expressed in colon, prostate, small intestine, testis and spleen, with lower expression in thymus, ovary, and peripheral blood leukocytes. Up-regulated expression in prostate, breast, and bladder cancer, but not in lung and colon cancer.

Its subcellular location is the cytoplasm. It is found in the nucleus. The protein is Prostate and breast cancer overexpressed gene 1 protein (PBOV1) of Homo sapiens (Human).